Consider the following 125-residue polypeptide: Lectin (125 aa).

Residues 1–120 form the C-type lectin domain; that stretch reads MDYEILFSDE…CGGARRVICE (120 aa). 2 cysteine pairs are disulfide-bonded: Cys21/Cys119 and Cys96/Cys111.

Homodimer.

In terms of biological role, role in the defense system of the organism against microorganisms. This calcium-binding lectin binds galactose. This chain is Lectin, found in Polyandrocarpa misakiensis (Tunicate).